The chain runs to 205 residues: uncharacterized protein (205 aa).

The tract at residues 1–42 is disordered; sequence MSRKRDKPYTNRHTPARISKRRRPWAPSSSEHDEIIDKPITK. The span at 14-24 shows a compositional bias: basic residues; that stretch reads TPARISKRRRP. The span at 30–40 shows a compositional bias: basic and acidic residues; the sequence is SEHDEIIDKPI. The RRM domain maps to 47–122; sequence PALVVMGLPA…KKLEVVWATD (76 aa). The interval 170–191 is disordered; the sequence is PRSDNTKGISGDGGISSPATTS.

This is an uncharacterized protein from Arabidopsis thaliana (Mouse-ear cress).